Consider the following 288-residue polypeptide: NAD kinase (288 aa).

The active-site Proton acceptor is the D68. NAD(+)-binding positions include 68–69 (DG), 142–143 (ND), R153, D172, and Q242.

It belongs to the NAD kinase family. A divalent metal cation serves as cofactor.

It localises to the cytoplasm. It carries out the reaction NAD(+) + ATP = ADP + NADP(+) + H(+). Its function is as follows. Involved in the regulation of the intracellular balance of NAD and NADP, and is a key enzyme in the biosynthesis of NADP. Catalyzes specifically the phosphorylation on 2'-hydroxyl of the adenosine moiety of NAD to yield NADP. The sequence is that of NAD kinase from Desulforamulus reducens (strain ATCC BAA-1160 / DSM 100696 / MI-1) (Desulfotomaculum reducens).